Here is a 740-residue protein sequence, read N- to C-terminus: Copalyl diphosphate synthase 2 (740 aa).

Residue Lys-154 participates in substrate binding. Mg(2+)-binding residues include Asp-287 and Asp-289. The DXDD motif signature appears at 287–290 (DADD). Lys-373 lines the substrate pocket.

This sequence belongs to the terpene synthase family. It depends on Mg(2+) as a cofactor.

The enzyme catalyses (2E,6E,10E)-geranylgeranyl diphosphate = (+)-copalyl diphosphate. It functions in the pathway secondary metabolite biosynthesis; terpenoid biosynthesis. Its function is as follows. Monofunctional diterpene synthase converting geranylgeranyl diphosphate to copalyl diphosphate. In Selaginella moellendorffii (Spikemoss), this protein is Copalyl diphosphate synthase 2 (CPS2).